The chain runs to 774 residues: Beta-D-xylosidase 1 (774 aa).

An N-terminal signal peptide occupies residues 1 to 30 (MSCYNKALLIGNKVVVILVFLLCLVHSSES). N131 is a glycosylation site (N-linked (GlcNAc...) asparagine). D296 is a catalytic residue. An N-linked (GlcNAc...) asparagine glycan is attached at N658.

It belongs to the glycosyl hydrolase 3 family. As to expression, expressed in leaves, stems, seedlings, roots, inflorescences, siliques and developing seeds. Expressed in the vasculature of the roots, leaves, flowers and silique. Expressed in tissues undergoing secondary cell wall thickening such as protoxylem, metaxylem, intrafascicular cambium and fibers.

The protein localises to the secreted. Its subcellular location is the extracellular space. It localises to the extracellular matrix. It carries out the reaction Hydrolysis of terminal non-reducing alpha-L-arabinofuranoside residues in alpha-L-arabinosides.. Functionally, involved in pectic arabinan modification in mucilage secretory cells. Also acts as a beta-D-xylosidase during the remodeling of xylans in vascular development. In Arabidopsis thaliana (Mouse-ear cress), this protein is Beta-D-xylosidase 1 (BXL1).